A 205-amino-acid chain; its full sequence is Probable thymidylate kinase (205 aa).

Residue 7 to 14 (GIDGAGKS) participates in ATP binding.

This sequence belongs to the thymidylate kinase family.

The enzyme catalyses dTMP + ATP = dTDP + ADP. This is Probable thymidylate kinase from Thermococcus onnurineus (strain NA1).